Reading from the N-terminus, the 308-residue chain is Homeobox protein abdominal-A homolog (308 aa).

A DNA-binding region (homeobox) is located at residues 138-197 (RRRGRQTYTRFQTLELEKEFHFNHYLTRRRRIEIAHALCLTERQIKIWFQNRRMKLKKEL). The span at 207–221 (ARREREEQDKMKNES) shows a compositional bias: basic and acidic residues. Residues 207 to 277 (ARREREEQDK…SGNLGSHLHH (71 aa)) are disordered. Residues 223–247 (KSAQQHHSQKQAQQEHTVVGSQQTS) are compositionally biased toward low complexity. Positions 248–269 (NGGGTGGGTGGSGGAGSGGSSG) are enriched in gly residues.

It belongs to the Antp homeobox family.

Its subcellular location is the nucleus. In terms of biological role, sequence-specific transcription factor which is part of a developmental regulatory system that provides cells with specific positional identities on the anterior-posterior axis. This chain is Homeobox protein abdominal-A homolog, found in Anopheles gambiae (African malaria mosquito).